Here is a 421-residue protein sequence, read N- to C-terminus: UDP-N-acetylglucosamine 1-carboxyvinyltransferase 1 (421 aa).

22–23 (KN) contributes to the phosphoenolpyruvate binding site. R95 contributes to the UDP-N-acetyl-alpha-D-glucosamine binding site. C119 functions as the Proton donor in the catalytic mechanism. A 2-(S-cysteinyl)pyruvic acid O-phosphothioketal modification is found at C119. UDP-N-acetyl-alpha-D-glucosamine-binding positions include 124-128 (RPIEQ), D308, and V330.

This sequence belongs to the EPSP synthase family. MurA subfamily.

The protein localises to the cytoplasm. It carries out the reaction phosphoenolpyruvate + UDP-N-acetyl-alpha-D-glucosamine = UDP-N-acetyl-3-O-(1-carboxyvinyl)-alpha-D-glucosamine + phosphate. It participates in cell wall biogenesis; peptidoglycan biosynthesis. In terms of biological role, cell wall formation. Adds enolpyruvyl to UDP-N-acetylglucosamine. The sequence is that of UDP-N-acetylglucosamine 1-carboxyvinyltransferase 1 from Staphylococcus aureus (strain MW2).